We begin with the raw amino-acid sequence, 330 residues long: Virulence plasmid integrase pGP8-D (330 aa).

The Core-binding (CB) domain maps to 39–124; the sequence is FSLFEVIMHW…SYISLTRFLN (86 aa). Positions 152 to 327 constitute a Tyr recombinase domain; sequence VKTNAMNRLQ…SREDNASKKM (176 aa). Active-site residues include Arg189, Lys214, His279, Arg282, and His305. Catalysis depends on Tyr314, which acts as the O-(3'-phospho-DNA)-tyrosine intermediate.

This sequence belongs to the 'phage' integrase family.

In Chlamydia muridarum (strain MoPn / Nigg), this protein is Virulence plasmid integrase pGP8-D.